The sequence spans 1028 residues: Isoleucine--tRNA ligase (1028 aa).

Residues 51–61 (PTANGRPHIGH) carry the 'HIGH' region motif. The 'KMSKS' region motif lies at 591-595 (KMSKS). ATP is bound at residue lysine 594.

This sequence belongs to the class-I aminoacyl-tRNA synthetase family. IleS type 2 subfamily. As to quaternary structure, monomer. Zn(2+) is required as a cofactor.

The protein resides in the cytoplasm. The catalysed reaction is tRNA(Ile) + L-isoleucine + ATP = L-isoleucyl-tRNA(Ile) + AMP + diphosphate. In terms of biological role, catalyzes the attachment of isoleucine to tRNA(Ile). As IleRS can inadvertently accommodate and process structurally similar amino acids such as valine, to avoid such errors it has two additional distinct tRNA(Ile)-dependent editing activities. One activity is designated as 'pretransfer' editing and involves the hydrolysis of activated Val-AMP. The other activity is designated 'posttransfer' editing and involves deacylation of mischarged Val-tRNA(Ile). This Thermoplasma volcanium (strain ATCC 51530 / DSM 4299 / JCM 9571 / NBRC 15438 / GSS1) protein is Isoleucine--tRNA ligase.